A 456-amino-acid polypeptide reads, in one-letter code: uncharacterized protein (456 aa).

The TRAM domain occupies 3–61 (TIKKNEVKTGKVIDLTHEGHGVVKVDRYPIFIPNALIDEEIKFKLIKVKKNFAIGKLIE). Residues Cys-74, Cys-80, Cys-83, and Cys-162 each contribute to the [4Fe-4S] cluster site. S-adenosyl-L-methionine-binding residues include Gln-286, Tyr-315, Glu-336, and Asp-384. Catalysis depends on Cys-411, which acts as the Nucleophile.

Belongs to the class I-like SAM-binding methyltransferase superfamily. RNA M5U methyltransferase family.

This is an uncharacterized protein from Staphylococcus epidermidis (strain ATCC 35984 / DSM 28319 / BCRC 17069 / CCUG 31568 / BM 3577 / RP62A).